Consider the following 150-residue polypeptide: Arginine repressor (150 aa).

This sequence belongs to the ArgR family.

It localises to the cytoplasm. It functions in the pathway amino-acid biosynthesis; L-arginine biosynthesis [regulation]. In terms of biological role, regulates arginine biosynthesis genes. This is Arginine repressor from Clostridium botulinum (strain 657 / Type Ba4).